The chain runs to 307 residues: Ribosomal protein L11 methyltransferase (307 aa).

Positions 156, 177, 199, and 243 each coordinate S-adenosyl-L-methionine.

Belongs to the methyltransferase superfamily. PrmA family.

The protein localises to the cytoplasm. It catalyses the reaction L-lysyl-[protein] + 3 S-adenosyl-L-methionine = N(6),N(6),N(6)-trimethyl-L-lysyl-[protein] + 3 S-adenosyl-L-homocysteine + 3 H(+). In terms of biological role, methylates ribosomal protein L11. The chain is Ribosomal protein L11 methyltransferase from Syntrophomonas wolfei subsp. wolfei (strain DSM 2245B / Goettingen).